Here is a 1098-residue protein sequence, read N- to C-terminus: Probable arabinosyltransferase B (1098 aa).

The next 12 membrane-spanning stretches (helical) occupy residues 28–50 (WVATIAGLIGFVLSVATPLLPVV), 217–239 (LKLLAIIGAIVATVVALIALWRL), 271–293 (ASWRTFTLTDAVVIFGFLLWHVI), 402–419 (LRPEGIIALGSLVTYVLI), 434–456 (AVVTAAFTLGVQPTGLIAVAALV), 472–494 (LVGTLPLVSPMLAAGTVILTVVF), 541–558 (FGFLITALCLFTAVFIML), 570–587 (PAWRLMGVIFGTMFFLMF), 597–619 (GLFAAVGAAMAALTTVLVSPSVL), 626–648 (MAFLAALFFLLALCWATTNGWWY), 663–685 (IDGITVSTIFFALFAIAAGYAAW), and 698–720 (LIRALTTAPVPIVAGFMAAVFVA).

This sequence belongs to the emb family.

It localises to the cell membrane. Its function is as follows. Arabinosyl transferase responsible for the polymerization of arabinose into the arabinan of arabinogalactan. In Mycobacterium bovis (strain ATCC BAA-935 / AF2122/97), this protein is Probable arabinosyltransferase B (embB).